Reading from the N-terminus, the 1059-residue chain is Carbamoyl phosphate synthase large chain (1059 aa).

A carboxyphosphate synthetic domain region spans residues 1-401; it reads MPKRKDIQKI…SLLKACRSLE (401 aa). Positions 129, 169, 175, 176, 208, 210, 215, 241, 242, 243, 284, and 298 each coordinate ATP. The ATP-grasp 1 domain maps to 133–327; the sequence is KQLMEELGQP…IAKLAAKIAV (195 aa). Mg(2+)-binding residues include Gln284, Glu298, and Asn300. Residues Gln284, Glu298, and Asn300 each coordinate Mn(2+). An oligomerization domain region spans residues 402-546; the sequence is VGVDHNELPA…YSTYGFENES (145 aa). The tract at residues 547-929 is carbamoyl phosphate synthetic domain; sequence VKSSKESVLV…ALYKAFEASY (383 aa). Positions 671–861 constitute an ATP-grasp 2 domain; that stretch reads EQALKELDIP…MAQVATRLIL (191 aa). Arg707, Ser746, Ile748, Glu752, Gly777, Val778, His779, Ser780, Gln820, and Glu832 together coordinate ATP. Mg(2+)-binding residues include Gln820, Glu832, and Asn834. Residues Gln820, Glu832, and Asn834 each contribute to the Mn(2+) site. Residues 930–1059 enclose the MGS-like domain; the sequence is LHLPNFGNVV…ESRSFTTEAI (130 aa). Residues 930 to 1059 are allosteric domain; the sequence is LHLPNFGNVV…ESRSFTTEAI (130 aa).

This sequence belongs to the CarB family. In terms of assembly, composed of two chains; the small (or glutamine) chain promotes the hydrolysis of glutamine to ammonia, which is used by the large (or ammonia) chain to synthesize carbamoyl phosphate. Tetramer of heterodimers (alpha,beta)4. Mg(2+) serves as cofactor. It depends on Mn(2+) as a cofactor.

It carries out the reaction hydrogencarbonate + L-glutamine + 2 ATP + H2O = carbamoyl phosphate + L-glutamate + 2 ADP + phosphate + 2 H(+). The enzyme catalyses hydrogencarbonate + NH4(+) + 2 ATP = carbamoyl phosphate + 2 ADP + phosphate + 2 H(+). The protein operates within amino-acid biosynthesis; L-arginine biosynthesis; carbamoyl phosphate from bicarbonate: step 1/1. Its pathway is pyrimidine metabolism; UMP biosynthesis via de novo pathway; (S)-dihydroorotate from bicarbonate: step 1/3. Its function is as follows. Large subunit of the glutamine-dependent carbamoyl phosphate synthetase (CPSase). CPSase catalyzes the formation of carbamoyl phosphate from the ammonia moiety of glutamine, carbonate, and phosphate donated by ATP, constituting the first step of 2 biosynthetic pathways, one leading to arginine and/or urea and the other to pyrimidine nucleotides. The large subunit (synthetase) binds the substrates ammonia (free or transferred from glutamine from the small subunit), hydrogencarbonate and ATP and carries out an ATP-coupled ligase reaction, activating hydrogencarbonate by forming carboxy phosphate which reacts with ammonia to form carbamoyl phosphate. The protein is Carbamoyl phosphate synthase large chain of Streptococcus gordonii (strain Challis / ATCC 35105 / BCRC 15272 / CH1 / DL1 / V288).